We begin with the raw amino-acid sequence, 626 residues long: Chaperone protein HtpG (626 aa).

Residues 1–331 (MSETVERHEF…TDDLPLNVSR (331 aa)) are a; substrate-binding. The interval 332 to 544 (EMLQSTPTLQ…GMGPDLQMQR (213 aa)) is b. Positions 545-626 (LLRRAGRGFG…GTVAKPAESA (82 aa)) are c.

Belongs to the heat shock protein 90 family. As to quaternary structure, homodimer.

The protein resides in the cytoplasm. Functionally, molecular chaperone. Has ATPase activity. This chain is Chaperone protein HtpG, found in Methylorubrum populi (strain ATCC BAA-705 / NCIMB 13946 / BJ001) (Methylobacterium populi).